Consider the following 75-residue polypeptide: Transcription attenuation protein MtrB (75 aa).

This sequence belongs to the MtrB family. Oligomer of 11 identical subunits arranged in doughnut-like structure.

Required for transcription attenuation control in the Trp operon. This trans-acting factor seems to recognize a 10 bases nucleotide sequence in the Trp leader transcript causing transcription termination. Binds the leader RNA only in presence of L-tryptophan. In Bacillus velezensis (strain DSM 23117 / BGSC 10A6 / LMG 26770 / FZB42) (Bacillus amyloliquefaciens subsp. plantarum), this protein is Transcription attenuation protein MtrB.